The following is a 901-amino-acid chain: Probable dipeptidyl-aminopeptidase B (901 aa).

A compositionally biased stretch (low complexity) spans 1–22; sequence MSSPRPSTSSTSSDSGLSVDTT. Positions 1-67 are disordered; it reads MSSPRPSTSS…EPFLPSAKKQ (67 aa). The Cytoplasmic segment spans residues 1-76; it reads MSSPRPSTSS…QAASGSRTSR (76 aa). The helical; Signal-anchor for type II membrane protein transmembrane segment at 77–97 threads the bilayer; the sequence is LIWGLVILCVAGWLWGLVLFV. Topologically, residues 98-901 are vacuolar; that stretch reads TQNRSAQQSV…VKRSLPMLVK (804 aa). N-linked (GlcNAc...) asparagine glycosylation is found at N334 and N625. The active-site Charge relay system is S739. The N-linked (GlcNAc...) asparagine glycan is linked to N793. Active-site charge relay system residues include D816 and H849.

Belongs to the peptidase S9B family.

It localises to the vacuole membrane. The catalysed reaction is Release of an N-terminal dipeptide, Xaa-Yaa-|-Zaa-, from a polypeptide, preferentially when Yaa is Pro, provided Zaa is neither Pro nor hydroxyproline.. Functionally, type IV dipeptidyl-peptidase which removes N-terminal dipeptides sequentially from polypeptides having unsubstituted N-termini provided that the penultimate residue is proline. This chain is Probable dipeptidyl-aminopeptidase B (dapB), found in Aspergillus niger (strain ATCC MYA-4892 / CBS 513.88 / FGSC A1513).